The sequence spans 69 residues: Protein transport protein Sec61 subunit gamma-3 (69 aa).

M1 is subject to N-acetylmethionine. Residues 1–32 (MEAIDSAIDPLRDFAKSSVRLVQRCHKPDRKE) lie on the Cytoplasmic side of the membrane. A helical membrane pass occupies residues 33 to 61 (FTKVAVRTAIGFVVMGFVGFFVKLVFIPI). At 62-69 (NNIIVGSS) the chain is on the extracellular side.

This sequence belongs to the SecE/SEC61-gamma family. Heterotrimeric complex composed of SEC61-alpha, SEC61-beta and SEC61-gamma.

It is found in the endoplasmic reticulum membrane. In terms of biological role, necessary for protein translocation in the endoplasmic reticulum. This is Protein transport protein Sec61 subunit gamma-3 (SEC61G3) from Arabidopsis thaliana (Mouse-ear cress).